The sequence spans 230 residues: uncharacterized protein (230 aa).

Transmembrane regions (helical) follow at residues 8-28 (SLIL…TMAF), 45-65 (SIIL…FIIF), 72-92 (LVLL…FLYL), 109-129 (PFSL…SVIS), 141-161 (IYVL…LLLA), 176-196 (MGIL…AIIF), and 203-223 (IYFL…LILF).

This sequence to P.aeruginosa PA0043 and M.thermoautotrophicum MTH1451.

It localises to the cell membrane. This is an uncharacterized protein from Aquifex aeolicus (strain VF5).